Consider the following 743-residue polypeptide: Phosphoribosylformylglycinamidine synthase subunit PurL (743 aa).

His50 is a catalytic residue. Residues Tyr53 and Lys92 each coordinate ATP. Glu94 provides a ligand contact to Mg(2+). Residues 95–98 and Arg117 contribute to the substrate site; that span reads SHNH. The active-site Proton acceptor is His96. Residue Asp118 participates in Mg(2+) binding. Gln241 serves as a coordination point for substrate. Mg(2+) is bound at residue Asp269. 313–315 is a substrate binding site; that stretch reads ESQ. Asp495 and Gly532 together coordinate ATP. Asn533 is a Mg(2+) binding site. A substrate-binding site is contributed by Ser535.

It belongs to the FGAMS family. As to quaternary structure, monomer. Part of the FGAM synthase complex composed of 1 PurL, 1 PurQ and 2 PurS subunits.

Its subcellular location is the cytoplasm. The catalysed reaction is N(2)-formyl-N(1)-(5-phospho-beta-D-ribosyl)glycinamide + L-glutamine + ATP + H2O = 2-formamido-N(1)-(5-O-phospho-beta-D-ribosyl)acetamidine + L-glutamate + ADP + phosphate + H(+). Its pathway is purine metabolism; IMP biosynthesis via de novo pathway; 5-amino-1-(5-phospho-D-ribosyl)imidazole from N(2)-formyl-N(1)-(5-phospho-D-ribosyl)glycinamide: step 1/2. Its function is as follows. Part of the phosphoribosylformylglycinamidine synthase complex involved in the purines biosynthetic pathway. Catalyzes the ATP-dependent conversion of formylglycinamide ribonucleotide (FGAR) and glutamine to yield formylglycinamidine ribonucleotide (FGAM) and glutamate. The FGAM synthase complex is composed of three subunits. PurQ produces an ammonia molecule by converting glutamine to glutamate. PurL transfers the ammonia molecule to FGAR to form FGAM in an ATP-dependent manner. PurS interacts with PurQ and PurL and is thought to assist in the transfer of the ammonia molecule from PurQ to PurL. This Rhizobium leguminosarum bv. trifolii (strain WSM2304) protein is Phosphoribosylformylglycinamidine synthase subunit PurL.